Consider the following 1027-residue polypeptide: Xyloglucanase (1027 aa).

Residues M1 to A32 form the signal peptide. D70 serves as the catalytic Nucleophile. 4 BNR repeats span residues R134 to Q143, W185 to K196, Y252 to T262, and F357 to T367. Catalysis depends on D479, which acts as the Proton donor. BNR repeat units follow at residues S537–Y545 and F717–V727. The 152-residue stretch at P876–P1027 folds into the CBM3 domain.

The protein belongs to the glycosyl hydrolase 74 family.

In terms of biological role, hydrolyzes the glucosidic bonds of unbranched Glc residues in tamarind seed xyloglucan, producing XXXG, XLXG, XXLG and XLLG. May have a dual endo- and exo- mode of action towards xyloglucan, or may have an endo-processive mode of action. The polypeptide is Xyloglucanase (Paenibacillus sp).